The primary structure comprises 319 residues: L-lactate dehydrogenase 2 (319 aa).

Residues Val17, Asp38, Lys43, Tyr69, and 83 to 84 each bind NAD(+); that span reads GA. Residues Gln86 and Arg92 each coordinate substrate. Residues Ser105, 122–124, and Ser147 each bind NAD(+); that span reads ATN. 124-127 lines the substrate pocket; the sequence is NPVD. 152–155 lines the substrate pocket; that stretch reads DSGR. The beta-D-fructose 1,6-bisphosphate site is built by Arg157 and His172. His179 serves as the catalytic Proton acceptor. A Phosphotyrosine modification is found at Tyr224. Residue Thr233 coordinates substrate.

The protein belongs to the LDH/MDH superfamily. LDH family. In terms of assembly, homotetramer.

It localises to the cytoplasm. It catalyses the reaction (S)-lactate + NAD(+) = pyruvate + NADH + H(+). It participates in fermentation; pyruvate fermentation to lactate; (S)-lactate from pyruvate: step 1/1. Allosterically activated by fructose 1,6-bisphosphate (FBP). Functionally, catalyzes the conversion of lactate to pyruvate. The sequence is that of L-lactate dehydrogenase 2 from Peribacillus psychrosaccharolyticus (Bacillus psychrosaccharolyticus).